The chain runs to 495 residues: ATP synthase subunit beta, chloroplastic (495 aa).

172–179 (GGAGVGKT) serves as a coordination point for ATP.

The protein belongs to the ATPase alpha/beta chains family. In terms of assembly, F-type ATPases have 2 components, CF(1) - the catalytic core - and CF(0) - the membrane proton channel. CF(1) has five subunits: alpha(3), beta(3), gamma(1), delta(1), epsilon(1). CF(0) has four main subunits: a(1), b(1), b'(1) and c(9-12).

Its subcellular location is the plastid. The protein resides in the chloroplast thylakoid membrane. The enzyme catalyses ATP + H2O + 4 H(+)(in) = ADP + phosphate + 5 H(+)(out). Produces ATP from ADP in the presence of a proton gradient across the membrane. The catalytic sites are hosted primarily by the beta subunits. This Barnardia japonica (Chinese squill) protein is ATP synthase subunit beta, chloroplastic.